The following is a 60-amino-acid chain: MAVQQNKKSRSARDMRRSHDALSENALSVEKTTGEVHLRHHVSPEGVYRGRKVIDKGADE.

The tract at residues Met-1–Pro-44 is disordered. The span at Ser-11–Leu-22 shows a compositional bias: basic and acidic residues.

The protein belongs to the bacterial ribosomal protein bL32 family.

The sequence is that of Large ribosomal subunit protein bL32 from Pseudomonas putida (strain W619).